A 215-amino-acid chain; its full sequence is Fanconi anemia core complex-associated protein 24 (215 aa).

Residues 160–215 (LRTVQQIPGVGKVKAPLLLQKFPSIQQLSNASIGELEQVVGQAVAQQIHAFFTQPR) form a ruvA domain 2-like region.

In terms of assembly, belongs to the multisubunit FA complex composed of FANCA, FANCB, FANCC, FANCE, FANCF, FANCG, FANCL/PHF9, FANCM and FAAP24. Interacts with FANCM.

It localises to the nucleus. In terms of biological role, plays a role in DNA repair through recruitment of the FA core complex to damaged DNA. Regulates FANCD2 monoubiquitination upon DNA damage. Induces chromosomal instability as well as hypersensitivity to DNA cross-linking agents, when repressed. Targets FANCM/FAAP24 complex to the DNA, preferentially to single strand DNA. This is Fanconi anemia core complex-associated protein 24 from Homo sapiens (Human).